Consider the following 146-residue polypeptide: MGEVKHLQINYKTDELFADFREFGNKNLYMIEELKGQMIDASSDSPFYGIFVGNKLVARMALLDKGEVEETYFPNSNDYILLWKLEVLDTYQRRGYAKQLLNFAKENKKPIKAIARNNSKEFFLKQGFKDVETKNPEGHDILIWNP.

The 140-residue stretch at 7-146 folds into the N-acetyltransferase domain; the sequence is LQINYKTDEL…EGHDILIWNP (140 aa).

This is an uncharacterized protein from Staphylococcus epidermidis (strain ATCC 12228 / FDA PCI 1200).